We begin with the raw amino-acid sequence, 154 residues long: Myoglobin (154 aa).

The Globin domain occupies 1-147 (MADVKKNCLA…FNDECQHQLA (147 aa)). Heme b is bound at residue histidine 96.

The protein belongs to the globin family.

The protein localises to the cytoplasm. The chain is Myoglobin (GLBB) from Nippostrongylus brasiliensis (Rat hookworm).